The following is a 123-amino-acid chain: Fluoride-specific ion channel FluC 2 (123 aa).

Helical transmembrane passes span 30 to 50 (FPLP…FVAG), 68 to 88 (VGFI…VLLL), and 93 to 113 (WPLA…AVWV). The Na(+) site is built by Gly72 and Thr75.

This sequence belongs to the fluoride channel Fluc/FEX (TC 1.A.43) family.

Its subcellular location is the cell membrane. It carries out the reaction fluoride(in) = fluoride(out). Its activity is regulated as follows. Na(+) is not transported, but it plays an essential structural role and its presence is essential for fluoride channel function. Its function is as follows. Fluoride-specific ion channel. Important for reducing fluoride concentration in the cell, thus reducing its toxicity. This chain is Fluoride-specific ion channel FluC 2, found in Symbiobacterium thermophilum (strain DSM 24528 / JCM 14929 / IAM 14863 / T).